We begin with the raw amino-acid sequence, 839 residues long: DNA (cytosine-5)-methyltransferase CMT3 (839 aa).

2 disordered regions span residues 1-38 (MAPK…EPVT) and 51-86 (LDEP…KTKD). The span at 19–30 (PKPKKRAPKRAK) shows a compositional bias: basic residues. Basic and acidic residues predominate over residues 51–70 (LDEPIPESEAKSTWPDRYKP). The BAH domain maps to 108–227 (QIYELNDDAY…LPYDTFEAIQ (120 aa)). The region spanning 269–813 (ATLLDLYSGC…YALGTAFQGL (545 aa)) is the SAM-dependent MTase C5-type domain. Residues 382–447 (FTVDKIVGIS…LGYKSGILPL (66 aa)) form the Chromo domain. Cysteine 460 is a catalytic residue.

Belongs to the class I-like SAM-binding methyltransferase superfamily. C5-methyltransferase family. Homodimer. Interacts with HP1 and, through its chromodomain, with the N-terminal tail of histone H3 doubly methylated at 'Lys-9' and 'Lys-27'. Binds to JMJ24. In terms of processing, ubiquitinated by JMJ24, subsequently beingargeted to proteasomal degradation thus initiating the destabilization of the heterochromatic state of endogenous silenced loci.

It is found in the nucleus. It carries out the reaction a 2'-deoxycytidine in DNA + S-adenosyl-L-methionine = a 5-methyl-2'-deoxycytidine in DNA + S-adenosyl-L-homocysteine + H(+). Involved in the CpXpG methylation (e.g. CHG cytosine) and in gene silencing. Methylates preferentially transposon-related sequences. Functionally redundant to DRM1/DRM2 to maintain non-CpG methylation. Involved in RNA-directed DNA methylation. This is DNA (cytosine-5)-methyltransferase CMT3 from Arabidopsis thaliana (Mouse-ear cress).